Consider the following 216-residue polypeptide: Major fimbrial subunit (216 aa).

The signal sequence occupies residues 1-20 (MKKTLLGSLILLAFAGNVQA). A disulfide bridge links C41 with C81.

The protein belongs to the fimbrial protein family.

The protein resides in the fimbrium. Its function is as follows. Mediates adherence to oropharyngeal epithelial cells. Helps the airway colonization process. This chain is Major fimbrial subunit (hifA), found in Haemophilus influenzae.